The primary structure comprises 229 residues: PHO85 cyclin-5 (229 aa).

Basic and acidic residues predominate over residues 1–24 (MDGNHRFTPDSKEFNTVVKSKESS). Residues 1–46 (MDGNHRFTPDSKEFNTVVKSKESSTGRNPYQTPPLEHNGTHHQTNY) are disordered.

Belongs to the cyclin family. PCL1,2 subfamily. As to quaternary structure, forms a cyclin-CDK complex with PHO85.

Cyclin partner of the cyclin-dependent kinase (CDK) PHO85. Positively controls degradation of transcription factor GCN4 under favorable growth conditions. The PCL5-PHO85 cyclin-CDK holoenzyme phosphorylates GCN4, which is required for its degradation by the E3 ubiquitin ligase complex SCF(Cdc4). Amino acid starvation reduces PCL5-PHO85-associated GCN4 kinase activity and leads to stabilization of GCN4. The sequence is that of PHO85 cyclin-5 (PCL5) from Saccharomyces cerevisiae (strain ATCC 204508 / S288c) (Baker's yeast).